The following is a 732-amino-acid chain: Cullin-3A (732 aa).

A Cullin neddylation domain is found at aspartate 662–aspartate 724. Residue lysine 676 forms a Glycyl lysine isopeptide (Lys-Gly) (interchain with G-Cter in NEDD8) linkage.

It belongs to the cullin family. Interacts with CSN2 and RBX1A. Interacts with BTB/POZ domain-containing proteins BPM1, BPM2, BPM3, BPM6, BT1, BT2, BT3, BT5, AT1G01640, AT1G21780 and AT5G48510. Interacts with SR1IP1. Interacts with NPR3 and NPR4. Binds to NPR1; this interaction requires NPR3 and NPR4. Post-translationally, neddylated. Deneddylated via its interaction with the COP9 signalosome (CSN) complex.

Functionally, component of the cullin-RING ubiquitin ligases (CRL), or CUL3-RBX1-BTB protein E3 ligase complexes which mediate the ubiquitination and subsequent proteasomal degradation of target proteins. The functional specificity of the CRL complex depends on the BTB domain-containing protein as the substrate recognition component. Involved in embryo pattern formation and endosperm development. Required for the normal division and organization of the root stem cells and columella root cap cells. Regulates primary root growth by an unknown pathway, but in an ethylene-dependent manner. Functions in distal root patterning, by an ethylene-independent mechanism. Functionally redundant with CUL3B. The chain is Cullin-3A from Arabidopsis thaliana (Mouse-ear cress).